A 621-amino-acid polypeptide reads, in one-letter code: MSNQEYTFQTEINQLLDLMIHSLYSNKEIFLRELVSNASDALDKLNYLMLTDEKLKGLNTTPSIHLSFDSQKKTLTIKDNGIGMDKNDLIEHLGTIAKSGTKNFLSALSGDKKKDSALIGQFGVGFYSAFMVASKIVVQTKKVNSDQAYAWVSDGKGKFEISECVKDEQGTEITLFLKDEDSHFASRWEIDSVVKKYSEHIPFPIFLTYTDTKHEGEGDNQKEIKEEKCEQINQASALWKMNKSELKDKDYKEFYQSFAHDNSEPLSYIHNKVEGSLEYTTLFYIPSTAPFDMFRVDYKSGVKLYVKRVFITDDDKELLPSYLRFVKGVIDSEDLPLNVSREILQQNKILANIRSASVKKILSEIERLSKDEKNYHKFYEPFGKVLKEGLYGDFENKEKLLELLRFYSKDKEKLISLKEYKENLKENQKSIYYLLGENLDLLKASPLLEKYAQKGYDVLLLSDEIDAFVMPGVNEYDKTPFKDASHSESLKELGLEEIHDEVKDQFKDLMKAFEENLKDEIKGVELSSHLTSAVALIGDEQNAMMANWMRQMGQSVPESKKTLELNPNHAILQKLLKCEDKEQLSAFIWLLYDGAKLLEKGALKDAKSFNERLNSVLLKAL.

Residues Met-1–Arg-341 are a; substrate-binding. The segment at Glu-342–Asn-547 is b. The c stretch occupies residues Trp-548 to Leu-621.

The protein belongs to the heat shock protein 90 family. Homodimer.

It localises to the cytoplasm. Functionally, molecular chaperone. Has ATPase activity. This is Chaperone protein HtpG from Helicobacter pylori (strain ATCC 700392 / 26695) (Campylobacter pylori).